A 310-amino-acid polypeptide reads, in one-letter code: 26S proteasome non-ATPase regulatory subunit 14 (310 aa).

Residues 31–166 (VYISSLALLK…IDAFRLINAN (136 aa)) enclose the MPN domain. Zn(2+) contacts are provided by His-113, His-115, and Asp-126. The short motif at 113-126 (HSHPGFGCWLSGVD) is the JAMM motif element. Ser-150 and Ser-224 each carry phosphoserine. Phosphothreonine is present on Thr-266.

This sequence belongs to the peptidase M67A family. PSMD14 subfamily. As to quaternary structure, component of the 19S proteasome regulatory particle complex. The 26S proteasome consists of a 20S core particle (CP) and two 19S regulatory subunits (RP). The regulatory particle is made of a lid composed of 9 subunits including PSMD4, a base containing 6 ATPases and few additional components. Within the complex, PSMD4 interacts with subunit PSMD7 through their respective MPN domain. Interacts with TXNL1. As to expression, widely expressed. Highest levels in heart and skeletal muscle.

Its function is as follows. Component of the 26S proteasome, a multiprotein complex involved in the ATP-dependent degradation of ubiquitinated proteins. This complex plays a key role in the maintenance of protein homeostasis by removing misfolded or damaged proteins, which could impair cellular functions, and by removing proteins whose functions are no longer required. Therefore, the proteasome participates in numerous cellular processes, including cell cycle progression, apoptosis, or DNA damage repair. The PSMD14 subunit is a metalloprotease that specifically cleaves 'Lys-63'-linked polyubiquitin chains within the complex. Plays a role in response to double-strand breaks (DSBs): acts as a regulator of non-homologous end joining (NHEJ) by cleaving 'Lys-63'-linked polyubiquitin, thereby promoting retention of JMJD2A/KDM4A on chromatin and restricting TP53BP1 accumulation. Also involved in homologous recombination repair by promoting RAD51 loading. This is 26S proteasome non-ATPase regulatory subunit 14 (PSMD14) from Homo sapiens (Human).